A 267-amino-acid chain; its full sequence is Phosphatidylglycerol--prolipoprotein diacylglyceryl transferase (267 aa).

7 helical membrane-spanning segments follow: residues 17–37 (LNIR…WLLA), 56–76 (LVTY…TLFY), 91–111 (IWNG…AIWL), 120–140 (LFEV…AGRL), 173–193 (QLYE…LFSA), 199–219 (MAVS…VEFF), and 236–256 (MGQI…GFAM). Residue arginine 139 participates in a 1,2-diacyl-sn-glycero-3-phospho-(1'-sn-glycerol) binding.

This sequence belongs to the Lgt family.

The protein localises to the cell inner membrane. It carries out the reaction L-cysteinyl-[prolipoprotein] + a 1,2-diacyl-sn-glycero-3-phospho-(1'-sn-glycerol) = an S-1,2-diacyl-sn-glyceryl-L-cysteinyl-[prolipoprotein] + sn-glycerol 1-phosphate + H(+). It functions in the pathway protein modification; lipoprotein biosynthesis (diacylglyceryl transfer). In terms of biological role, catalyzes the transfer of the diacylglyceryl group from phosphatidylglycerol to the sulfhydryl group of the N-terminal cysteine of a prolipoprotein, the first step in the formation of mature lipoproteins. The chain is Phosphatidylglycerol--prolipoprotein diacylglyceryl transferase from Oleidesulfovibrio alaskensis (strain ATCC BAA-1058 / DSM 17464 / G20) (Desulfovibrio alaskensis).